The primary structure comprises 597 residues: Elongation factor 4 (597 aa).

The 183-residue stretch at 2–184 folds into the tr-type G domain; that stretch reads KHIRNFSIIA…TIVKCIPAPE (183 aa). GTP contacts are provided by residues 14-19 and 131-134; these read DHGKST and NKID.

Belongs to the TRAFAC class translation factor GTPase superfamily. Classic translation factor GTPase family. LepA subfamily.

The protein resides in the cell inner membrane. It catalyses the reaction GTP + H2O = GDP + phosphate + H(+). Its function is as follows. Required for accurate and efficient protein synthesis under certain stress conditions. May act as a fidelity factor of the translation reaction, by catalyzing a one-codon backward translocation of tRNAs on improperly translocated ribosomes. Back-translocation proceeds from a post-translocation (POST) complex to a pre-translocation (PRE) complex, thus giving elongation factor G a second chance to translocate the tRNAs correctly. Binds to ribosomes in a GTP-dependent manner. This is Elongation factor 4 from Aliivibrio salmonicida (strain LFI1238) (Vibrio salmonicida (strain LFI1238)).